The sequence spans 385 residues: Cell division protein FtsZ (385 aa).

GTP contacts are provided by residues glycine 20 to asparagine 24, glycine 107 to glycine 109, glutamate 138, arginine 142, and asparagine 186.

Belongs to the FtsZ family. In terms of assembly, homodimer. Polymerizes to form a dynamic ring structure in a strictly GTP-dependent manner. Interacts directly with several other division proteins.

It localises to the cytoplasm. Essential cell division protein that forms a contractile ring structure (Z ring) at the future cell division site. The regulation of the ring assembly controls the timing and the location of cell division. One of the functions of the FtsZ ring is to recruit other cell division proteins to the septum to produce a new cell wall between the dividing cells. Binds GTP and shows GTPase activity. This Buchnera aphidicola subsp. Baizongia pistaciae (strain Bp) protein is Cell division protein FtsZ.